A 550-amino-acid polypeptide reads, in one-letter code: Putative pentatricopeptide repeat-containing protein At5g37570 (550 aa).

PPR repeat units follow at residues 73–107 (GTYL…GLAR), 109–143 (DEYT…GFDK), 144–174 (DVVV…MPER), 175–205 (NAVS…MPER), 206–240 (NLGS…DIIS), 241–267 (YTSM…ARGV), 268–302 (DVRA…NVKP), 303–333 (DEFI…LHQR), 339–369 (SHYV…MPQR), 370–404 (DLVS…GIVP), 405–435 (DEVA…MRKK), and 441–475 (SPDH…AHAS). A type E motif region spans residues 476 to 550 (AWGSLLGGCS…KICGRSWISR (75 aa)).

This sequence belongs to the PPR family. PCMP-E subfamily.

This Arabidopsis thaliana (Mouse-ear cress) protein is Putative pentatricopeptide repeat-containing protein At5g37570 (PCMP-E37).